The sequence spans 66 residues: Large ribosomal subunit protein bL33c (66 aa).

Belongs to the bacterial ribosomal protein bL33 family.

The protein resides in the plastid. The protein localises to the chloroplast. In Dioscorea elephantipes (Elephant's foot yam), this protein is Large ribosomal subunit protein bL33c.